A 225-amino-acid polypeptide reads, in one-letter code: MKIVVAIGGSILLKEYDCKKFQEYSEILKSLASEHEIFVVVGGGKPAREYIGVVRELGAGEAQCDDIGIEVTRINAKLLLSALGDAAYQKVPHNFQEALEYSATGKIIVMGGTEPAHSTDAVSAILAEYIHADKLINLTSVDGMYDKDPNKYEDAKLIKEITASEMIEFISGKDTKAGTYEFFDMTAIQMIKRSSLETVIANGYDSENLIKAINGEEVGTKVISK.

9–10 serves as a coordination point for ATP; it reads GS. Gly-43 provides a ligand contact to UMP. ATP contacts are provided by Gly-44 and Arg-48. Residues Asp-65 and 113 to 119 each bind UMP; that span reads TEPAHST. Positions 139, 145, and 148 each coordinate ATP.

It belongs to the UMP kinase family. As to quaternary structure, homohexamer.

Its subcellular location is the cytoplasm. The enzyme catalyses UMP + ATP = UDP + ADP. The protein operates within pyrimidine metabolism; CTP biosynthesis via de novo pathway; UDP from UMP (UMPK route): step 1/1. Its activity is regulated as follows. Inhibited by UTP. In terms of biological role, catalyzes the reversible phosphorylation of UMP to UDP. The sequence is that of Uridylate kinase from Methanobrevibacter smithii (strain ATCC 35061 / DSM 861 / OCM 144 / PS).